The chain runs to 169 residues: Small ribosomal subunit protein uS5 (169 aa).

Positions 15-79 constitute an S5 DRBM domain; that stretch reads LKDQVVAINR…ESAKKNLVKV (65 aa).

It belongs to the universal ribosomal protein uS5 family. In terms of assembly, part of the 30S ribosomal subunit. Contacts proteins S4 and S8.

With S4 and S12 plays an important role in translational accuracy. Its function is as follows. Located at the back of the 30S subunit body where it stabilizes the conformation of the head with respect to the body. The polypeptide is Small ribosomal subunit protein uS5 (Koribacter versatilis (strain Ellin345)).